Reading from the N-terminus, the 120-residue chain is Large ribosomal subunit protein bL19 (120 aa).

It belongs to the bacterial ribosomal protein bL19 family.

In terms of biological role, this protein is located at the 30S-50S ribosomal subunit interface and may play a role in the structure and function of the aminoacyl-tRNA binding site. This is Large ribosomal subunit protein bL19 from Nostoc punctiforme (strain ATCC 29133 / PCC 73102).